We begin with the raw amino-acid sequence, 341 residues long: UDP-N-acetylenolpyruvoylglucosamine reductase (341 aa).

In terms of domain architecture, FAD-binding PCMH-type spans 19 to 191; it reads MAVRAAHFCQ…TAVRFRLSRR (173 aa). Arg167 is an active-site residue. The active-site Proton donor is Ser241. Residue Glu337 is part of the active site.

This sequence belongs to the MurB family. Requires FAD as cofactor.

The protein resides in the cytoplasm. The catalysed reaction is UDP-N-acetyl-alpha-D-muramate + NADP(+) = UDP-N-acetyl-3-O-(1-carboxyvinyl)-alpha-D-glucosamine + NADPH + H(+). The protein operates within cell wall biogenesis; peptidoglycan biosynthesis. Its function is as follows. Cell wall formation. The protein is UDP-N-acetylenolpyruvoylglucosamine reductase of Chromobacterium violaceum (strain ATCC 12472 / DSM 30191 / JCM 1249 / CCUG 213 / NBRC 12614 / NCIMB 9131 / NCTC 9757 / MK).